A 154-amino-acid polypeptide reads, in one-letter code: Aspartate carbamoyltransferase regulatory chain (154 aa).

Positions 109, 114, 138, and 141 each coordinate Zn(2+).

This sequence belongs to the PyrI family. As to quaternary structure, contains catalytic and regulatory chains. It depends on Zn(2+) as a cofactor.

Its function is as follows. Involved in allosteric regulation of aspartate carbamoyltransferase. The protein is Aspartate carbamoyltransferase regulatory chain of Pectobacterium carotovorum subsp. carotovorum (strain PC1).